Here is a 606-residue protein sequence, read N- to C-terminus: NADH-ubiquinone oxidoreductase chain 5 (606 aa).

Helical transmembrane passes span 1 to 21, 35 to 55, 87 to 107, 114 to 134, 140 to 160, 171 to 191, 211 to 233, 241 to 261, 272 to 292, 301 to 320, 325 to 347, 366 to 386, 413 to 433, 457 to 477, 482 to 502, and 582 to 602; these read MNLF…PIMM, YVKN…MVYL, LMFM…SMWY, INQF…LVTA, LFIG…WWFG, AILY…WFLS, FPLM…HPWL, TPVS…FLLV, LIQT…AICA, IIAF…IGLN, AFLH…GSII, LPFT…MPFL, LIAT…ALLG, LLVG…PMTT, MPLH…IIAF, and GLIK…MILF.

Belongs to the complex I subunit 5 family. Core subunit of respiratory chain NADH dehydrogenase (Complex I) which is composed of 45 different subunits.

It is found in the mitochondrion inner membrane. It carries out the reaction a ubiquinone + NADH + 5 H(+)(in) = a ubiquinol + NAD(+) + 4 H(+)(out). In terms of biological role, core subunit of the mitochondrial membrane respiratory chain NADH dehydrogenase (Complex I) which catalyzes electron transfer from NADH through the respiratory chain, using ubiquinone as an electron acceptor. Essential for the catalytic activity and assembly of complex I. The protein is NADH-ubiquinone oxidoreductase chain 5 (MT-ND5) of Balaenoptera physalus (Fin whale).